Here is a 426-residue protein sequence, read N- to C-terminus: Ubiquitin carboxyl-terminal hydrolase 46 (426 aa).

A lipid anchor (N-myristoyl glycine) is attached at Gly-2. Residues 27-406 (YGLVNFGNTC…SAYILFYQAR (380 aa)) form the USP domain. Residue Cys-36 is the Nucleophile of the active site. The tract at residues 162-181 (TAGLPRSDEKGTSERNGGIT) is disordered. Catalysis depends on His-342, which acts as the Proton acceptor.

This sequence belongs to the peptidase C19 family. As to quaternary structure, interacts with wdr-20 and wdr-48; the catalytic activity of usp-46 is increased in the presence of both wdr-20 and wdr-48. Interacts with glr-1; the interaction results in deubiquitination of glr-1. Expressed in a number of tissues including the nervous system, pharynx, body wall muscle, vulva muscle and intestine and is detected in many head and ventral cord neurons.

The protein resides in the perikaryon. It localises to the cytoplasm. The enzyme catalyses Thiol-dependent hydrolysis of ester, thioester, amide, peptide and isopeptide bonds formed by the C-terminal Gly of ubiquitin (a 76-residue protein attached to proteins as an intracellular targeting signal).. Functionally, regulates the abundance of the glr-1 glutamate receptor in the ventral nerve cord by promoting its deubiquitination and preventing its degradation in the lysosome. Contributes to the regulation of embryonic polarity. In Caenorhabditis elegans, this protein is Ubiquitin carboxyl-terminal hydrolase 46 (usp-46).